The following is a 421-amino-acid chain: Gamma-glutamyl phosphate reductase (421 aa).

It belongs to the gamma-glutamyl phosphate reductase family.

It is found in the cytoplasm. It catalyses the reaction L-glutamate 5-semialdehyde + phosphate + NADP(+) = L-glutamyl 5-phosphate + NADPH + H(+). The protein operates within amino-acid biosynthesis; L-proline biosynthesis; L-glutamate 5-semialdehyde from L-glutamate: step 2/2. Functionally, catalyzes the NADPH-dependent reduction of L-glutamate 5-phosphate into L-glutamate 5-semialdehyde and phosphate. The product spontaneously undergoes cyclization to form 1-pyrroline-5-carboxylate. The protein is Gamma-glutamyl phosphate reductase of Herminiimonas arsenicoxydans.